Consider the following 319-residue polypeptide: Ferrochelatase (319 aa).

Positions 194 and 275 each coordinate Fe cation.

It belongs to the ferrochelatase family.

The protein resides in the cytoplasm. The catalysed reaction is heme b + 2 H(+) = protoporphyrin IX + Fe(2+). It functions in the pathway porphyrin-containing compound metabolism; protoheme biosynthesis; protoheme from protoporphyrin-IX: step 1/1. Its function is as follows. Catalyzes the ferrous insertion into protoporphyrin IX. The chain is Ferrochelatase from Hamiltonella defensa subsp. Acyrthosiphon pisum (strain 5AT).